The sequence spans 1295 residues: Phosphoribosylformylglycinamidine synthase (1295 aa).

The tract at residues 302 to 327 (APFSGAATGSGGEIRDEGATGRGSKP) is disordered. ATP-binding positions include 306-317 (GAATGSGGEIRD) and Ala-677. Residues Asp-678, Glu-717, Asn-721, and Asp-884 each coordinate Mg(2+). Residue Ser-886 coordinates ATP. In terms of domain architecture, Glutamine amidotransferase type-1 spans 1042–1295 (MAILREQGVN…MFRNARVYLG (254 aa)). The Nucleophile role is filled by Cys-1135. Catalysis depends on residues His-1260 and Glu-1262.

In the N-terminal section; belongs to the FGAMS family. In terms of assembly, monomer.

It is found in the cytoplasm. The catalysed reaction is N(2)-formyl-N(1)-(5-phospho-beta-D-ribosyl)glycinamide + L-glutamine + ATP + H2O = 2-formamido-N(1)-(5-O-phospho-beta-D-ribosyl)acetamidine + L-glutamate + ADP + phosphate + H(+). Its pathway is purine metabolism; IMP biosynthesis via de novo pathway; 5-amino-1-(5-phospho-D-ribosyl)imidazole from N(2)-formyl-N(1)-(5-phospho-D-ribosyl)glycinamide: step 1/2. Phosphoribosylformylglycinamidine synthase involved in the purines biosynthetic pathway. Catalyzes the ATP-dependent conversion of formylglycinamide ribonucleotide (FGAR) and glutamine to yield formylglycinamidine ribonucleotide (FGAM) and glutamate. The protein is Phosphoribosylformylglycinamidine synthase of Pseudoalteromonas atlantica (strain T6c / ATCC BAA-1087).